The following is a 340-amino-acid chain: Probable allantoicase (340 aa).

The protein belongs to the allantoicase family.

The enzyme catalyses allantoate + H2O = (S)-ureidoglycolate + urea. It functions in the pathway nitrogen metabolism; (S)-allantoin degradation; (S)-ureidoglycolate from allantoate (aminidohydrolase route): step 1/1. This chain is Probable allantoicase, found in Rhizobium meliloti (strain 1021) (Ensifer meliloti).